The primary structure comprises 821 residues: Dapper homolog 1 (821 aa).

A coiled-coil region spans residues 88–136 (LNTEEKLLEENILLLRKQLNCLRRRDAGLINQLQELDRQISDLRLDTET). 4 disordered regions span residues 288–312 (SKPG…SSWH), 386–432 (QDAS…STTN), 564–615 (NSAS…KTKR), and 627–655 (ERHT…VLAK). The span at 388–400 (ASATSTEPSTASP) shows a compositional bias: low complexity. Residues 401-432 (QRQWSAESKGGTPQNGAYLSSSQPQNSYSTTN) show a composition bias toward polar residues. 3 stretches are compositionally biased toward basic residues: residues 584–593 (DKHRTGSRRT), 601–615 (HLHK…KTKR), and 639–649 (AQRHHGHHRHH). Positions 818–821 (MTTV) match the PDZ-binding motif.

The protein belongs to the dapper family. As to quaternary structure, interacts with dvl2.

Its subcellular location is the cytoplasm. In terms of biological role, involved in regulation of intracellular signaling pathways during development. Specifically thought to play a role in canonical and/or non-canonical Wnt signaling pathways through interaction with DSH (Dishevelled) family proteins. Binds to dvl2 and may regulate the degradation of ctnnb1/beta-catenin, thereby modulating the transcriptional activation of target genes of the Wnt signaling pathway. Seems to activate the canonical Wnt signaling pathway. In Danio rerio (Zebrafish), this protein is Dapper homolog 1 (dact1).